The sequence spans 428 residues: Histidine--tRNA ligase (428 aa).

This sequence belongs to the class-II aminoacyl-tRNA synthetase family. As to quaternary structure, homodimer.

Its subcellular location is the cytoplasm. It catalyses the reaction tRNA(His) + L-histidine + ATP = L-histidyl-tRNA(His) + AMP + diphosphate + H(+). In Thermosynechococcus vestitus (strain NIES-2133 / IAM M-273 / BP-1), this protein is Histidine--tRNA ligase.